The chain runs to 173 residues: U1 small nuclear ribonucleoprotein C (173 aa).

A Matrin-type zinc finger spans residues 4–36 (YYCDYCDTYLTHDSPSVRKTHCQGRKHKDNVKF). Positions 72–100 (AAIPPPANMQGPPRPVPPGPMGPGPNMLG) are disordered. A compositionally biased stretch (pro residues) spans 73-94 (AIPPPANMQGPPRPVPPGPMGP).

Belongs to the U1 small nuclear ribonucleoprotein C family. As to quaternary structure, U1 snRNP is composed of the 7 core Sm proteins B/B', D1, D2, D3, E, F and G that assemble in a heptameric protein ring on the Sm site of the small nuclear RNA to form the core snRNP, and at least 3 U1 snRNP-specific proteins U1-70K, U1-A and U1-C. U1-C interacts with U1 snRNA and the 5' splice-site region of the pre-mRNA.

The protein resides in the nucleus. In terms of biological role, component of the spliceosomal U1 snRNP, which is essential for recognition of the pre-mRNA 5' splice-site and the subsequent assembly of the spliceosome. U1-C is directly involved in initial 5' splice-site recognition for both constitutive and regulated alternative splicing. The interaction with the 5' splice-site seems to precede base-pairing between the pre-mRNA and the U1 snRNA. Stimulates commitment or early (E) complex formation by stabilizing the base pairing of the 5' end of the U1 snRNA and the 5' splice-site region. This is U1 small nuclear ribonucleoprotein C from Pediculus humanus subsp. corporis (Body louse).